Here is a 511-residue protein sequence, read N- to C-terminus: MDIRPSEISKILKEQIKNFDQEAEFSEIGWVLSVGDGIARVYGLDNVQAGEMVSFSNGVQGMALNLEMDNVGVVIFGSDRDIREGDTVKRLGSIVDVPVGPELLGRVVDALGNPIDGKGPLNAKNRRRVDVKAPGIIPRQSVHEPMSTGLKAIDALIPIGRGQRELVIGDRQTGKTAILLDTFLNQKPFHENEAGSDQDKVYCIYVAIGQKRSTVAQFVKVLEERGALDYSIIVAATASDPAPMQFIAPLAGCAMGEYFRDNGQHALIGYDDLSKQAVAYRQMSLLLRRPPGREAYPGDVFYLHSRLLERAAKLNADNGSGSLTALPVIETQANDVSAYIPTNVISITDGQIFLETNLFYQGIRPAVNVGLSVSRVGSAAQIKAMKQVAGSIKGELAQYREMAAFAQFGSDLDASTQRLLNRGARLTELLKQPQFSPLKTEEQVVTIFAGVNGYLDALAVSDVGRFERGLLALLRSDHQELLNAIASQKQITDELKGKLVAILDRYAKNFS.

169–176 (GDRQTGKT) provides a ligand contact to ATP.

This sequence belongs to the ATPase alpha/beta chains family. In terms of assembly, F-type ATPases have 2 components, CF(1) - the catalytic core - and CF(0) - the membrane proton channel. CF(1) has five subunits: alpha(3), beta(3), gamma(1), delta(1), epsilon(1). CF(0) has three main subunits: a(1), b(2) and c(9-12). The alpha and beta chains form an alternating ring which encloses part of the gamma chain. CF(1) is attached to CF(0) by a central stalk formed by the gamma and epsilon chains, while a peripheral stalk is formed by the delta and b chains.

It is found in the cell inner membrane. The catalysed reaction is ATP + H2O + 4 H(+)(in) = ADP + phosphate + 5 H(+)(out). Produces ATP from ADP in the presence of a proton gradient across the membrane. The alpha chain is a regulatory subunit. In Bartonella bacilliformis (strain ATCC 35685 / KC583 / Herrer 020/F12,63), this protein is ATP synthase subunit alpha.